Consider the following 132-residue polypeptide: MDVTRLVLATLLVFLCFFAAYSHLPPEEKLRDDRSLRSNSSVNLLDLPSVSIVALNKKSKKISRKEAEKRRSSKKEASKQKVARPRTPLSVPCVSTRGSCKPPAPACCHPCASCQCRFFRSACSCRVLNVNC.

The N-terminal stretch at 1-22 is a signal peptide; that stretch reads MDVTRLVLATLLVFLCFFAAYS. N-linked (GlcNAc...) asparagine glycosylation is present at N39. The interval 60–93 is disordered; the sequence is KKISRKEAEKRRSSKKEASKQKVARPRTPLSVPC. Basic and acidic residues predominate over residues 64-79; the sequence is RKEAEKRRSSKKEASK. 5 cysteine pairs are disulfide-bonded: C93–C108, C100–C114, C107–C125, C111–C132, and C116–C123. Residues 93-132 form the Agouti domain; sequence CVSTRGSCKPPAPACCHPCASCQCRFFRSACSCRVLNVNC.

It localises to the secreted. In terms of biological role, involved in the regulation of melanogenesis. The binding of ASP to MC1R precludes alpha-MSH initiated signaling and thus blocks production of cAMP, leading to a down-regulation of eumelanogenesis (brown/black pigment) and thus increasing synthesis of pheomelanin (yellow/red pigment). The chain is Agouti-signaling protein (ASIP) from Cebuella pygmaea (Pygmy marmoset).